The primary structure comprises 213 residues: Thiamine-phosphate synthase (213 aa).

4-amino-2-methyl-5-(diphosphooxymethyl)pyrimidine contacts are provided by residues 38 to 42 and Asn-70; that span reads QLRIK. Asp-71 and Asp-90 together coordinate Mg(2+). Ser-109 is a 4-amino-2-methyl-5-(diphosphooxymethyl)pyrimidine binding site. 135 to 137 lines the 2-[(2R,5Z)-2-carboxy-4-methylthiazol-5(2H)-ylidene]ethyl phosphate pocket; that stretch reads TQT. A 4-amino-2-methyl-5-(diphosphooxymethyl)pyrimidine-binding site is contributed by Lys-138. Residues Gly-168 and 188–189 each bind 2-[(2R,5Z)-2-carboxy-4-methylthiazol-5(2H)-ylidene]ethyl phosphate; that span reads VS.

Belongs to the thiamine-phosphate synthase family. Requires Mg(2+) as cofactor.

The catalysed reaction is 2-[(2R,5Z)-2-carboxy-4-methylthiazol-5(2H)-ylidene]ethyl phosphate + 4-amino-2-methyl-5-(diphosphooxymethyl)pyrimidine + 2 H(+) = thiamine phosphate + CO2 + diphosphate. The enzyme catalyses 2-(2-carboxy-4-methylthiazol-5-yl)ethyl phosphate + 4-amino-2-methyl-5-(diphosphooxymethyl)pyrimidine + 2 H(+) = thiamine phosphate + CO2 + diphosphate. It carries out the reaction 4-methyl-5-(2-phosphooxyethyl)-thiazole + 4-amino-2-methyl-5-(diphosphooxymethyl)pyrimidine + H(+) = thiamine phosphate + diphosphate. Its pathway is cofactor biosynthesis; thiamine diphosphate biosynthesis; thiamine phosphate from 4-amino-2-methyl-5-diphosphomethylpyrimidine and 4-methyl-5-(2-phosphoethyl)-thiazole: step 1/1. Functionally, condenses 4-methyl-5-(beta-hydroxyethyl)thiazole monophosphate (THZ-P) and 2-methyl-4-amino-5-hydroxymethyl pyrimidine pyrophosphate (HMP-PP) to form thiamine monophosphate (TMP). The sequence is that of Thiamine-phosphate synthase from Pectobacterium atrosepticum (strain SCRI 1043 / ATCC BAA-672) (Erwinia carotovora subsp. atroseptica).